Here is a 199-residue protein sequence, read N- to C-terminus: Prolactin (199 aa).

A disulfide bridge connects residues Cys-4 and Cys-11. Residues Ser-26, Ser-34, and Ser-90 each carry the phosphoserine modification. Intrachain disulfides connect Cys-58–Cys-174 and Cys-191–Cys-199.

Belongs to the somatotropin/prolactin family. Interacts with PRLR.

It is found in the secreted. Functionally, prolactin acts primarily on the mammary gland by promoting lactation. The sequence is that of Prolactin (PRL) from Balaenoptera borealis (Sei whale).